A 381-amino-acid polypeptide reads, in one-letter code: Ceramide-binding protein svf-1 (381 aa).

The peripherally associates with membranes stretch occupies residues 1-18; it reads MFKWAQAALANVAGTKEP.

This sequence belongs to the SVF1 family.

It localises to the golgi apparatus. The protein localises to the cis-Golgi network membrane. It is found in the endoplasmic reticulum membrane. Its subcellular location is the cytoplasm. The protein resides in the nucleus. Ceramide-binding protein that may transfer ceramides from the endoplasmic reticulum membrane to the cis-Golgi network membrane, and is thereby required for the biosynthesis of complex sphingolipids. The protein is Ceramide-binding protein svf-1 (svf-1) of Neurospora crassa (strain ATCC 24698 / 74-OR23-1A / CBS 708.71 / DSM 1257 / FGSC 987).